Here is a 421-residue protein sequence, read N- to C-terminus: Signal recognition particle receptor FtsY (421 aa).

A compositionally biased stretch (basic residues) spans 1–10; it reads MFSFFRRKKK. The tract at residues 1–22 is disordered; it reads MFSFFRRKKKQETPAPEEAQIQ. GTP is bound by residues 228–235, 309–313, and 373–376; these read GINGAGKT, DTAGR, and TKLD.

The protein belongs to the GTP-binding SRP family. FtsY subfamily. As to quaternary structure, part of the signal recognition particle protein translocation system, which is composed of SRP and FtsY. SRP is a ribonucleoprotein composed of Ffh and a 4.5S RNA molecule.

It localises to the cell membrane. The protein localises to the cytoplasm. It carries out the reaction GTP + H2O = GDP + phosphate + H(+). In terms of biological role, involved in targeting and insertion of nascent membrane proteins into the cytoplasmic membrane. Acts as a receptor for the complex formed by the signal recognition particle (SRP) and the ribosome-nascent chain (RNC). Interaction with SRP-RNC leads to the transfer of the RNC complex to the Sec translocase for insertion into the membrane, the hydrolysis of GTP by both Ffh and FtsY, and the dissociation of the SRP-FtsY complex into the individual components. The chain is Signal recognition particle receptor FtsY from Neisseria meningitidis serogroup C.